Reading from the N-terminus, the 599-residue chain is MDGSRRVRATSVLPRYGPPCLFKGHLSTKSNAFCTDSSSLRLSTLQLVKNHMAVHYNKILSAKAAVDCSVPVSVSTSIKYADQQRREKLKKELAQCEKEFKLTKTAMRANYKNNSKSLFNTLQKPSGEPQIEDDMLKEEMNGFSSFARSLVPSSERLHLSLHKSSKVITNGPEKNSSSSPSSVDYAASGPRKLSSGALYGRRPRSTFPNSHRFQLVISKAPSGDLLDKHSELFSNKQLPFTPRTLKTEAKSFLSQYRYYTPAKRKKDFTDQRIEAETQTELSFKSELGTAETKNMTDSEMNIKQASNCVTYDAKEKIAPLPLEGHDSTWDEIKDDALQHSSPRAMCQYSLKPPSTRKIYSDEEELLYLSFIEDVTDEILKLGLFSNRFLERLFERHIKQNKHLEEEKMRHLLHVLKVDLGCTSEENSVKQNDVDMLNVFDFEKAGNSEPNELKNESEVTIQQERQQYQKALDMLLSAPKDENEIFPSPTEFFMPIYKSKHSEGVIIQQVNDETNLETSTLDENHPSISDSLTDRETSVNVIEGDSDPEKVEISNGLCGLNTSPSQSVQFSSVKGDNNHDMELSTLKIMEMSIEDCPLDV.

The interval 163–205 (KSSKVITNGPEKNSSSSPSSVDYAASGPRKLSSGALYGRRPRS) is disordered. Positions 166–175 (KVITNGPEKN) are enriched in polar residues.

In terms of assembly, found in a complex with CFAP410, NEK1 and SPATA7. Interacts with NEK1. Interacts with RPGRIP1. Interacts with RPGR. Interacts with NPHP4. Interacts with NPHP1. Interacts with AHI1.

Its subcellular location is the cytoplasm. It localises to the cytoskeleton. It is found in the cilium axoneme. The protein resides in the cilium basal body. The protein localises to the cell projection. Its subcellular location is the cilium. It localises to the photoreceptor outer segment. Involved in the maintenance of both rod and cone photoreceptor cells. It is required for recruitment and proper localization of RPGRIP1 to the photoreceptor connecting cilium (CC), as well as photoreceptor-specific localization of proximal CC proteins at the distal CC. Maintenance of protein localization at the photoreceptor-specific distal CC is essential for normal microtubule stability and to prevent photoreceptor degeneration. In Homo sapiens (Human), this protein is Spermatogenesis-associated protein 7 (SPATA7).